The primary structure comprises 110 residues: HTH-type transcriptional regulator TnrA (110 aa).

Residues V13–K81 enclose the HTH merR-type domain. A DNA-binding region (H-T-H motif) is located at residues I16 to E35.

In terms of assembly, homodimer. Under conditions of nitrogen excess, TnrA forms a stable complex with feedback-inhibited GlnA. Interacts with GlnK-AmtB complex.

It localises to the cell membrane. Its activity is regulated as follows. Under conditions of nitrogen excess, the DNA-binding activity is inhibited by the formation of a stable complex with feedback-inhibited GlnA. The presence of glutamine and AMP increases the inhibitory activity of glutamine synthetase by more than 1000-fold. Its function is as follows. Transcription regulator that actives the transcription of genes required for nitrogen assimilation such as nrgAB (ammonium transport), nasABCDEF (nitrate/nitrite assimilation), ureABC (urea degradation) and gabP (GABA transport), during nitrogen limitation. Also represses glnRA and gltAB in the absence of ammonium. On the contrary of the MerR members, which require longer DNA sites for high-affinity binding, TnrA requires a DNA sequence of 17 nucleotides as minimal binding site. This is HTH-type transcriptional regulator TnrA from Bacillus subtilis (strain 168).